Reading from the N-terminus, the 809-residue chain is Phenylalanine--tRNA ligase beta subunit (809 aa).

Residues lysine 39–serine 152 form the tRNA-binding domain. The 89-residue stretch at lysine 404–cysteine 492 folds into the B5 domain. Mg(2+) contacts are provided by aspartate 470, aspartate 476, glutamate 479, and glutamate 480. The FDX-ACB domain maps to asparagine 717 to arginine 808.

This sequence belongs to the phenylalanyl-tRNA synthetase beta subunit family. Type 1 subfamily. As to quaternary structure, tetramer of two alpha and two beta subunits. Mg(2+) serves as cofactor.

The protein resides in the cytoplasm. The enzyme catalyses tRNA(Phe) + L-phenylalanine + ATP = L-phenylalanyl-tRNA(Phe) + AMP + diphosphate + H(+). This chain is Phenylalanine--tRNA ligase beta subunit, found in Dehalococcoides mccartyi (strain CBDB1).